Reading from the N-terminus, the 253-residue chain is Triosephosphate isomerase (253 aa).

Position 9 to 11 (9 to 11 (NWK)) interacts with substrate. The active-site Electrophile is the His-94. Catalysis depends on Glu-163, which acts as the Proton acceptor. Substrate-binding positions include Gly-169, Ser-209, and 230 to 231 (GG).

This sequence belongs to the triosephosphate isomerase family. Homodimer.

The protein resides in the cytoplasm. The enzyme catalyses D-glyceraldehyde 3-phosphate = dihydroxyacetone phosphate. It participates in carbohydrate biosynthesis; gluconeogenesis. It functions in the pathway carbohydrate degradation; glycolysis; D-glyceraldehyde 3-phosphate from glycerone phosphate: step 1/1. Its function is as follows. Involved in the gluconeogenesis. Catalyzes stereospecifically the conversion of dihydroxyacetone phosphate (DHAP) to D-glyceraldehyde-3-phosphate (G3P). In Dehalococcoides mccartyi (strain CBDB1), this protein is Triosephosphate isomerase.